Consider the following 1365-residue polypeptide: MSRRKQAKPRSVKAVEEAESTECASGWDSSVQTDAAVSERDSDRKESRAVGEDGEQSVTSHDERVGEEDLDDDSIFTCDNCQQDFECLADLTEHRTNHCPADGDDDPGLSWVASSPSSKDVASPSQMLGDGCCDMGMGTGEEEGGSGLPYPCQFCDKSFSRLSYLKRHEQIHSDKLPFKCTFCSRLFKHKRSRDRHVKLHTGDKKYSCQECEAAFSRSDHLKIHLKTHSSSKPFKCSICKRGFSSTSSLQSHMQAHRKNKEHLAKKDQGKRDGSSSDVTEQDQDLYMCDYCEETFSQTDELEKHVLTQHPQLSDRAELQCIHCPEIFSDEGTLLTHIDRTHANKKHKCPMCAEQFPSVEDVYCHLDSHRQPDSSNHSASPDPVLGSVASMSSATPDSSASLERGSTPDSTLKPGQSRRKLAPSSDHDDGTWSGKVTYSCPYCSKRDFNSLAVLEIHLKTIHADKPQQSHTCQLCLETLPTLYNLNEHVRKAHRSSGNSASNFPLLQFSNVSAFHCNYCPDMFADINSLQEHIRVSHCLSGGVVAGSTTLEGNHAFFCNQCSMGFLTESSLTEHIQQTHCSSVGGVTKMESPVLQPSQSFMEVYSCPYCTNSPIFGSLLKLTKHIKENHKNIPLANNKRKVKVADLSPASSDVEISSPKRHRVTGDSTPAVANGDYPCNQCDLRFSSFEGFQAHLKSHLELLLRRQSCPQCNKEDFDSQEALLQHLTIHYTTTSTQYVCESCDKQFSSVDDLQKHLLDMHTFVLYHCTLCQEVFDSKVSIQVHLAVKHSNEKKMYRCTACAWDFRKESDLQLHVKHSHLGHPASTGAPGKARKCIFCGETFGTEVELQCHITTHSKKYNCRLCGKAFHAIVLLERHLREKHCIFDGGNGNGNGGSQNGTPNGVTQSSKRSTAGSTAAAEQADLQNMLLKGGSQETANSHEASGGEEELDASEPMYACDICGAAYTMESLLQNHRLRDHNIRPGEDDAGSRKKKADFIKGNHKCNVCSRTFFSENGLREHAQTHRGPAKHYMCPICGERFPSLLTLTEHKVTHSKSLDTGTCRICKMPLQSEEEFIEHCQMHPDLRNSLTGFRCVVCMQTVTSTLELKIHGTFHMQKLSSSGGSGGGGGSASSSPNGQLQAHKLYKCALCLKDFKNKQELVKIDVNGLPYGLCAGCMSRGTNGQSPTVVVTPQEAGDKGTTGLRCSECAVKFETLEDLESHIQVDHTEMSPETSGAKKVTDASPVPKKKTYQCIKCQMTFETEREIQIHVANHMIEEGINHECKLCNQMFDSPAKLLCHLIEHSFEGMGGTFKCPVCFTVFVQANKLQQHIFAVHGQEDKIYDCSQCPQKFFFQTELQNHTLSQHAQ.

Residues 1–11 are compositionally biased toward basic residues; sequence MSRRKQAKPRS. The disordered stretch occupies residues 1–69; that stretch reads MSRRKQAKPR…SHDERVGEED (69 aa). Positions 37-51 are enriched in basic and acidic residues; it reads VSERDSDRKESRAVG. A C2H2-type 1 zinc finger spans residues 76-98; the sequence is FTCDNCQQDFECLADLTEHRTNH. Residues 99 to 126 form a disordered region; sequence CPADGDDDPGLSWVASSPSSKDVASPSQ. Positions 112–126 are enriched in low complexity; sequence VASSPSSKDVASPSQ. 4 C2H2-type zinc fingers span residues 150–172, 178–200, 206–228, and 234–256; these read YPCQ…EQIH, FKCT…VKLH, YSCQ…LKTH, and FKCS…MQAH. The tract at residues 250–280 is disordered; the sequence is QSHMQAHRKNKEHLAKKDQGKRDGSSSDVTE. The segment covering 261 to 274 has biased composition (basic and acidic residues); that stretch reads EHLAKKDQGKRDGS. 3 C2H2-type zinc fingers span residues 286 to 309, 318 to 341, and 346 to 368; these read YMCD…LTQH, LQCI…DRTH, and HKCP…LDSH. The tract at residues 366–429 is disordered; it reads DSHRQPDSSN…LAPSSDHDDG (64 aa). Low complexity predominate over residues 386–400; it reads SVASMSSATPDSSAS. The C2H2-type 9; degenerate zinc finger occupies 437-461; sequence YSCPYCSKRDFNSLAVLEIHLKTIH. 3 C2H2-type zinc fingers span residues 469–492, 513–536, and 555–578; these read HTCQ…RKAH, FHCN…RVSH, and FFCN…QQTH. A C2H2-type 13; atypical zinc finger spans residues 603-628; sequence YSCPYCTNSPIFGSLLKLTKHIKENH. C2H2-type zinc fingers lie at residues 675-697, 705-728, 736-759, 764-787, 794-817, 831-853, and 857-880; these read YPCN…LKSH, QSCP…LTIH, YVCE…LDMH, YHCT…AVKH, YRCT…KHSH, RKCI…ITTH, and YNCR…REKH. Residues 885–895 are compositionally biased toward gly residues; the sequence is GGNGNGNGGSQ. A disordered region spans residues 885–916; the sequence is GGNGNGNGGSQNGTPNGVTQSSKRSTAGSTAA. Polar residues predominate over residues 902 to 913; the sequence is VTQSSKRSTAGS. A C2H2-type 21; degenerate zinc finger spans residues 954 to 976; the sequence is YACDICGAAYTMESLLQNHRLRD. C2H2-type zinc fingers lie at residues 1000-1022, 1029-1051, 1090-1112, 1201-1224, 1249-1271, 1279-1301, 1310-1333, and 1340-1363; these read HKCN…AQTH, YMCP…KVTH, FRCV…GTFH, LRCS…QVDH, YQCI…VANH, HECK…LIEH, FKCP…FAVH, and YDCS…LSQH.

It belongs to the krueppel C2H2-type zinc-finger protein family.

Its subcellular location is the nucleus. Its function is as follows. Transcription factor that can both act as an activator or a repressor depending on the context. Plays a central role in BMP signaling and olfactory neurogenesis. Associates with SMADs in response to bmp2 leading to activate transcription of BMP target genes. Acts as a transcriptional repressor involved in terminal olfactory receptor neurons differentiation. Involved in olfactory neurogenesis by participating in a developmental switch that regulates the transition from differentiation to maturation in olfactory receptor neurons. In Danio rerio (Zebrafish), this protein is Zinc finger protein 423 (znf423).